Reading from the N-terminus, the 482-residue chain is MSYPQGYLYQPSASLALYSCPAYSTTVISGPRTDELGRSPSGSAFSPYAGSTAFTASSAGFNSPLQYSGDPAAAFTSYVGSPYDHSAGMAGSLGYHPYAAPLGTYPYGDPAYRKNATRDATATLKAWLNEHRKNPYPTKGEKIMLAIITKMTLTQVSTWFANARRRLKKENKMTWTPRNRSEDEEDDENIDLEKNEEDDPRKLEEKGDQDGDAGDQKRSPSAVDFDRLEGEVRQGKELDQTRSDSEQNEVEERNDLLSKNSAPPTSPLCPPDQSPQAQEDQNLHRHTVHNHHHQSIQQLHHHSHQSHPLDLVHRNALVQHGPVTNNATSVIHSPPASTSKPKLWSLAEIATSSDKVKESSDAAAVAGTTPAQSMVVSASSPSRSPSAQCHFPSNTVLSRPLYYSNPFYPGYTNYGTFSHLHSHHGPSTTSPTVNSTHHFSGINQTVLNRAEALAKECKLRSQSQADLNKDTPYEMKKGMSSI.

The homeobox DNA-binding region spans 109-171 (DPAYRKNATR…NARRRLKKEN (63 aa)). Disordered regions lie at residues 173–307 (MTWT…HQSH) and 462–482 (QSQADLNKDTPYEMKKGMSSI). Residues 182-198 (EDEEDDENIDLEKNEED) are compositionally biased toward acidic residues. Positions 199 to 256 (DPRKLEEKGDQDGDAGDQKRSPSAVDFDRLEGEVRQGKELDQTRSDSEQNEVEERNDL) are enriched in basic and acidic residues. The span at 264–273 (PTSPLCPPDQ) shows a compositional bias: pro residues. Over residues 284-305 (HRHTVHNHHHQSIQQLHHHSHQ) the composition is skewed to basic residues. Basic and acidic residues predominate over residues 467 to 482 (LNKDTPYEMKKGMSSI).

It belongs to the TALE/IRO homeobox family. As to expression, expressed in the neural plate in overlapping patterns with other irx members, which all share an anterior border of expression. Broadly expressed in the tailbud rhombencephalon (hindbrain). Outside the nervous system and at tailbud stages, expressed in the developing otic vesicle and branchial arches.

It is found in the nucleus. Acts partially redundantly with other irx members in neural patterning. Required for formation of the posterior forebrain, midbrain, hindbrain, and to a lesser extent, spinal cord. Patterns the neuroectoderm in both the anterior/posterior and dorsal/ventral axes. Does not appear to play a role in pronephros kidney development. Involved in craniofacial and gonadal development. Modulates the migration of progenitor cell populations in branchial arches and gonads by repressing CXCL12. The protein is Iroquois-class homeodomain protein irx-5 of Xenopus tropicalis (Western clawed frog).